Consider the following 740-residue polypeptide: Ribulose bisphosphate carboxylase, chloroplastic (740 aa).

The transit peptide at 1-55 (MPSSSFTTGLALGAGALVGANAFVAPTAKTTNLRAPTQEASLQVAASQQTEQPAP) directs the protein to the chloroplast. The helical transmembrane segment at 56-76 (STSALPWAFGAGACLALAAGG) threads the bilayer. N213 serves as a coordination point for substrate. K268 serves as the catalytic Proton acceptor. Position 270 (K270) interacts with substrate. K293, D295, and E296 together coordinate Mg(2+). An N6-carboxylysine modification is found at K293. H389 serves as the catalytic Proton acceptor. Substrate is bound by residues R390, H423, and S470.

The protein belongs to the RuBisCO large chain family. Type II subfamily. As to quaternary structure, homodimer. It depends on Mg(2+) as a cofactor.

The protein resides in the plastid. It is found in the chloroplast membrane. The enzyme catalyses 2 (2R)-3-phosphoglycerate + 2 H(+) = D-ribulose 1,5-bisphosphate + CO2 + H2O. It catalyses the reaction D-ribulose 1,5-bisphosphate + O2 = 2-phosphoglycolate + (2R)-3-phosphoglycerate + 2 H(+). In terms of biological role, ruBisCO catalyzes two reactions: the carboxylation of D-ribulose 1,5-bisphosphate, the primary event in carbon dioxide fixation, as well as the oxidative fragmentation of the pentose substrate. Both reactions occur simultaneously and in competition at the same active site. The chain is Ribulose bisphosphate carboxylase, chloroplastic (rbcL) from Heterocapsa triquetra (Dinoflagellate).